Here is a 710-residue protein sequence, read N- to C-terminus: Polyribonucleotide nucleotidyltransferase (710 aa).

Positions 489 and 495 each coordinate Mg(2+). A KH domain is found at Pro556 to Ile615. The region spanning Gly625 to Lys693 is the S1 motif domain. The tract at residues Ser691–Asp710 is disordered. Basic and acidic residues predominate over residues Pro700 to Asp710.

The protein belongs to the polyribonucleotide nucleotidyltransferase family. Mg(2+) is required as a cofactor.

The protein resides in the cytoplasm. It carries out the reaction RNA(n+1) + phosphate = RNA(n) + a ribonucleoside 5'-diphosphate. Its function is as follows. Involved in mRNA degradation. Catalyzes the phosphorolysis of single-stranded polyribonucleotides processively in the 3'- to 5'-direction. The chain is Polyribonucleotide nucleotidyltransferase from Streptococcus pyogenes serotype M49 (strain NZ131).